The chain runs to 627 residues: Serine/threonine-protein phosphatase 2A 56 kDa regulatory subunit delta 2 isoform (627 aa).

Residues 1 to 37 (MKGLRSKFVKALSLKDEQGSHKNGHSKSHYISKNGSY) are disordered.

The protein belongs to the phosphatase 2A regulatory subunit B family. In terms of assembly, PP2A consists of a common heterodimeric core enzyme, composed of a 36 kDa catalytic subunit (subunit C) and a 65 kDa constant regulatory subunit (PR65 or subunit A), that associates with a variety of regulatory subunits. Proteins that associate with the core dimer include three families of regulatory subunits B (the R2/B/PR55/B55, R3/B''/PR72/PR130/PR59 and R5/B'/B56 families), the 48 kDa variable regulatory subunit, viral proteins, and cell signaling molecules.

It is found in the cytoplasm. The protein localises to the cell tip. Its function is as follows. The B regulatory subunit might modulate substrate selectivity and catalytic activity, and might also direct the localization of the catalytic enzyme to a particular subcellular compartment. Has a role in cell shape control and septum formation. The polypeptide is Serine/threonine-protein phosphatase 2A 56 kDa regulatory subunit delta 2 isoform (par2) (Schizosaccharomyces pombe (strain 972 / ATCC 24843) (Fission yeast)).